The following is a 299-amino-acid chain: Putative fructokinase (299 aa).

Thr130 provides a ligand contact to ATP. Zn(2+)-binding residues include His153, Cys168, His171, and Cys174. ATP-binding positions include Pro182 and 230 to 234; that span reads GVMQQ.

The protein belongs to the ROK (NagC/XylR) family. Mg(2+) serves as cofactor.

It carries out the reaction D-fructose + ATP = D-fructose 6-phosphate + ADP + H(+). With respect to regulation, inhibited by zinc ions. In terms of biological role, seems to be involved in the degradation of glucomannan. The protein is Putative fructokinase (gmuE) of Bacillus subtilis (strain 168).